We begin with the raw amino-acid sequence, 159 residues long: Ribonuclease H (159 aa).

Residues threonine 10–glutamate 153 enclose the RNase H type-1 domain. Residues aspartate 19, glutamate 57, aspartate 79, and aspartate 145 each contribute to the Mg(2+) site.

The protein belongs to the RNase H family. As to quaternary structure, monomer. Mg(2+) serves as cofactor.

It is found in the cytoplasm. It catalyses the reaction Endonucleolytic cleavage to 5'-phosphomonoester.. Functionally, endonuclease that specifically degrades the RNA of RNA-DNA hybrids. The sequence is that of Ribonuclease H from Polaromonas sp. (strain JS666 / ATCC BAA-500).